A 424-amino-acid polypeptide reads, in one-letter code: DNA primase DnaG (424 aa).

One can recognise a Toprim domain in the interval 171–245 (DDIIVVEGRA…DVDFVARAPP (75 aa)). Residues Glu177, Asp219, and Asp221 each coordinate Mg(2+).

The protein belongs to the archaeal DnaG primase family. In terms of assembly, forms a ternary complex with MCM helicase and DNA. It depends on Mg(2+) as a cofactor.

It catalyses the reaction ssDNA + n NTP = ssDNA/pppN(pN)n-1 hybrid + (n-1) diphosphate.. Its function is as follows. RNA polymerase that catalyzes the synthesis of short RNA molecules used as primers for DNA polymerase during DNA replication. The protein is DNA primase DnaG of Methanocaldococcus jannaschii (strain ATCC 43067 / DSM 2661 / JAL-1 / JCM 10045 / NBRC 100440) (Methanococcus jannaschii).